A 198-amino-acid polypeptide reads, in one-letter code: Crinkler effector protein BLC01 (198 aa).

Residues 1 to 15 form the signal peptide; sequence MMVKLICAIVDIAGA. Residues 16–55 are LQLFLAK domain; the sequence is AFPIDIDTNELVGDFKKVIKAENSRTIACDANDLRLFLAK. The DWL domain stretch occupies residues 56 to 113; it reads TDGRWLTEFEVQNGVADISVFEELDVVGAPLNMIGLSEETVSSVAITKELVKAKKTPL. The HVLVXXP motif signature appears at 114–119; that stretch reads HVLVVP.

This sequence belongs to the Crinkler effector family.

The protein localises to the secreted. It is found in the host cell. Its function is as follows. Secreted effector that elicits necrosis in host plants, a characteristic of plant innate immunity. This is Crinkler effector protein BLC01 from Bremia lactucae (Lettuce downy mildew).